The primary structure comprises 126 residues: Protein translocase subunit SecE (126 aa).

The next 3 membrane-spanning stretches (helical) occupy residues 20–40 (WLAAFVLAAAAVVGNYLYGEM), 42–62 (VVVRAAGVVVLIAAALGVAAT), and 97–117 (IVLAVSIVMALVLWGIDGIMV).

Belongs to the SecE/SEC61-gamma family. In terms of assembly, component of the Sec protein translocase complex. Heterotrimer consisting of SecY, SecE and SecG subunits. The heterotrimers can form oligomers, although 1 heterotrimer is thought to be able to translocate proteins. Interacts with the ribosome. Interacts with SecDF, and other proteins may be involved. Interacts with SecA.

The protein localises to the cell inner membrane. In terms of biological role, essential subunit of the Sec protein translocation channel SecYEG. Clamps together the 2 halves of SecY. May contact the channel plug during translocation. This chain is Protein translocase subunit SecE, found in Vibrio alginolyticus.